The following is a 1130-amino-acid chain: 3-hydroxy-3-methylglutaryl-coenzyme A reductase 1 (1130 aa).

The Cytoplasmic portion of the chain corresponds to 1 to 46 (MATSLITRKLRSAEATNDVEPGWLKRQVTGVLQSISSHACQHPIHT). A helical membrane pass occupies residues 47–67 (IVVIALLASTTYVGLLEGSLF). Over 68 to 242 (DSVRNSRNIA…DLIKHAETID (175 aa)) the chain is Lumenal. N148 carries N-linked (GlcNAc...) asparagine glycosylation. An SSD domain is found at 242–415 (DIVIMTLGYL…FTFYTTILCI (174 aa)). Residues 243-263 (IVIMTLGYLSMHLSFVSLFFS) traverse the membrane as a helical segment. The Cytoplasmic portion of the chain corresponds to 264–270 (MRRLGSN). The helical transmembrane segment at 271–291 (FWLAATVLFSGVFAFLFGLLV) threads the bilayer. The Lumenal portion of the chain corresponds to 292 to 296 (TTKLG). Residues 297–317 (VPINVLLLSEGLPFLVVTIGF) traverse the membrane as a helical segment. At 318–366 (EKPIILTRAVLTAAADNRGRAGQASSSTTKSIQDSIQTAIKEQGFEIIR) the chain is on the cytoplasmic side. The helical transmembrane segment at 367-387 (DYCIEIAILIAGAASGVQGGL) threads the bilayer. At 388 to 389 (RQ) the chain is on the lumenal side. A helical transmembrane segment spans residues 390 to 410 (FCFLAAWILFFDCVLLFTFYT). Residues 411–476 (TILCIKLEIN…RKLRSSSVRR (66 aa)) are Cytoplasmic-facing. The chain crosses the membrane as a helical span at residues 477-497 (FKILMVGGFVLVNVVNLSTIP). Residues 498 to 601 (FRDSSQGAGL…ESLLKSIEDP (104 aa)) lie on the Lumenal side of the membrane. The helical transmembrane segment at 602 to 622 (IISKWIIAALTLSIILNGYLF) threads the bilayer. The Cytoplasmic segment spans residues 623–1130 (NAARWSIKEP…ARGLTMSSSE (508 aa)). Residue E792 is the Charge relay system of the active site. Residue 798 to 804 (STSRGAK) coordinates CoA. NADP(+) is bound by residues 859–861 (SRF) and 886–894 (DAMGMNMIS). K926 acts as the Charge relay system in catalysis. 955–957 (VLK) contributes to the CoA binding site. Residue D1002 is the Charge relay system of the active site. 1097-1098 (AH) contributes to the CoA binding site. Residue H1098 is the Proton donor of the active site. 1102–1103 (NR) is a binding site for NADP(+). Residues 1103–1122 (RSAATTRTSTPVSAAVSAAR) show a composition bias toward low complexity. The segment at 1103-1130 (RSAATTRTSTPVSAAVSAARGLTMSSSE) is disordered.

The protein belongs to the HMG-CoA reductase family.

Its subcellular location is the endoplasmic reticulum membrane. It carries out the reaction (R)-mevalonate + 2 NADP(+) + CoA = (3S)-3-hydroxy-3-methylglutaryl-CoA + 2 NADPH + 2 H(+). The protein operates within metabolic intermediate biosynthesis; (R)-mevalonate biosynthesis; (R)-mevalonate from acetyl-CoA: step 3/3. Its function is as follows. HMG-CoA reductase; part of the first module of ergosterol biosynthesis pathway that includes the early steps of the pathway, conserved across all eukaryotes, and which results in the formation of mevalonate from acetyl-coenzyme A (acetyl-CoA). Hmg1 and hmg2 catalyze the reduction of hydroxymethylglutaryl-CoA (HMG-CoA) to mevalonate. The first module starts with the action of the cytosolic acetyl-CoA acetyltransferase erg10B that catalyzes the formation of acetoacetyl-CoA. The hydroxymethylglutaryl-CoA synthases erg13A and erg13B then condense acetyl-CoA with acetoacetyl-CoA to form HMG-CoA. The rate-limiting step of the early module is the reduction to mevalonate by the 3-hydroxy-3-methylglutaryl-coenzyme A (HMG-CoA) reductases hmg1 and hmg2. Mevalonate is also a precursor for the extracellular siderophore triacetylfusarinine C (TAFC). The polypeptide is 3-hydroxy-3-methylglutaryl-coenzyme A reductase 1 (Aspergillus fumigatus (strain ATCC MYA-4609 / CBS 101355 / FGSC A1100 / Af293) (Neosartorya fumigata)).